A 506-amino-acid polypeptide reads, in one-letter code: MGSTISPPSGEYLLEMRGINKSFPGVKALDNVNLNVRPHSIHALMGENGAGKSTLLKCLFGIYQKDSGSIVFQGKEVDFHSAKEALENGISMVHQELNLVLQRSVMDNMWLGRYPTKGMFVDQDKMYQDTKAIFDELDIDIDPRARVGTLSVSQMQMIEIAKAFSYNAKIVIMDEPTSSLTEKEVNHLFTIIRKLKERGCGIVYISHKMEEIFQLCDEITILRDGQWIATQPLEGLDMDKIIAMMVGRSLNQRFPDKENKPGDVILEVRHLTSLRQPSIRDVSFDLHKGEILGIAGLVGAKRTDIVETLFGIREKSSGTITLHGKKINNHTANEAINHGFALVTEERRSTGIYAYLDIGFNSLISNIRNYKNKVGLLDNSRMKSDTQWVIDSMRVKTPGHRTQIGSLSGGNQQKVIIGRWLLTQPEILMLDEPTRGIDVGAKFEIYQLIAELAKKGKGIIIISSEMPELLGITDRILVMSNGLVSGIVDTKTTTQNEILRLASLHL.

2 ABC transporter domains span residues 14 to 249 (LEMR…VGRS) and 259 to 506 (NKPG…SLHL). Position 46 to 53 (46 to 53 (GENGAGKS)) interacts with ATP.

This sequence belongs to the ABC transporter superfamily. Galactose/methyl galactoside importer (TC 3.A.1.2.3) family. In terms of assembly, the complex is composed of one ATP-binding protein (MglA), two transmembrane proteins (MglC) and a solute-binding protein (MglB).

The protein localises to the cell inner membrane. The enzyme catalyses D-galactose(out) + ATP + H2O = D-galactose(in) + ADP + phosphate + H(+). It catalyses the reaction methyl beta-D-galactoside(out) + ATP + H2O = methyl beta-D-galactoside(in) + ADP + phosphate + H(+). Stimulated 3-fold by galactose and inhibited by vanadate, N-ethylmaleimide, and 5-methoxyindole-2-carboxylic acid. Part of the ABC transporter complex MglABC involved in galactose/methyl galactoside import. Responsible for energy coupling to the transport system. The chain is Galactose/methyl galactoside import ATP-binding protein MglA from Salmonella typhimurium (strain LT2 / SGSC1412 / ATCC 700720).